The following is a 217-amino-acid chain: Histone H1-gamma, late (217 aa).

Disordered stretches follow at residues 1-21 (MSAAKPKVAKKARVAPAHPPS) and 80-217 (GKGA…PAKK). In terms of domain architecture, H15 spans 17-91 (AHPPSSQMVV…GASGSFKLGK (75 aa)). Over residues 104–113 (IAAKKAKLAA) the composition is skewed to basic residues. Over residues 114-123 (KKKEQREKKA) the composition is skewed to basic and acidic residues. Residues 124 to 217 (LKTKARKEKV…AKKAAKPAKK (94 aa)) show a composition bias toward basic residues.

Belongs to the histone H1/H5 family.

It localises to the nucleus. Its subcellular location is the chromosome. Histones H1 are necessary for the condensation of nucleosome chains into higher-order structures. The sequence is that of Histone H1-gamma, late from Strongylocentrotus purpuratus (Purple sea urchin).